The primary structure comprises 299 residues: METKTAKILDGKTLAEKIQKELTAQIIDAQAKIGRPPGLAVLMVGDNPASAAYVRNKEKSCAKVGIASFGKHFPQETTQTELEDVIAALNQDEQVDGILVQLPLPEHLDAVKLLHQIEPDKDADGLHPVNLGRLVRGEKGLRSCTPAGVMRLLAEYEISLRGKQAVVVGRSILVGKPMALMLLEADATVTIAHSRSQDLKSITQNADILIAAAGLPGLITADMVKPGAVVVDVGINRVSDAHGKSRLVGDINFASIAGVAEYITPVPGGIGPMTVALLLQNTVTSYLQTAKESGALDVK.

NADP(+) is bound by residues 169–171, Ser-194, and Ile-235; that span reads GRS.

Belongs to the tetrahydrofolate dehydrogenase/cyclohydrolase family. As to quaternary structure, homodimer.

The catalysed reaction is (6R)-5,10-methylene-5,6,7,8-tetrahydrofolate + NADP(+) = (6R)-5,10-methenyltetrahydrofolate + NADPH. It carries out the reaction (6R)-5,10-methenyltetrahydrofolate + H2O = (6R)-10-formyltetrahydrofolate + H(+). It functions in the pathway one-carbon metabolism; tetrahydrofolate interconversion. Functionally, catalyzes the oxidation of 5,10-methylenetetrahydrofolate to 5,10-methenyltetrahydrofolate and then the hydrolysis of 5,10-methenyltetrahydrofolate to 10-formyltetrahydrofolate. The polypeptide is Bifunctional protein FolD (Nostoc sp. (strain PCC 7120 / SAG 25.82 / UTEX 2576)).